A 253-amino-acid polypeptide reads, in one-letter code: Short-chain dehydrogenase/reductase ATR9 (253 aa).

NADP(+) is bound by residues Ser-15, Ser-16, Ile-18, Ser-38, Asn-39, Arg-42, Asp-65, and Lys-129. The Proton donor role is filled by Ser-147. Residue Thr-194 participates in NADP(+) binding.

The protein belongs to the short-chain dehydrogenases/reductases (SDR) family.

The protein operates within mycotoxin biosynthesis. Short-chain dehydrogenase/reductase; part of the core atranone cluster (CAC) which products are predicted to catalyze most or all steps of mycotoxin atranone synthesis, starting from geranylgeranyl pyrophosphate (GGPP). The initial cyclization of GGPP to dolabellane is probably performed by the terpene cyclase ATR13. The Baeyer-Villiger oxidation near the end of the atranone synthesis, which converts atranones D and E to atranones F and G is predicted to be catalyzed by the monooxygenase ATR8. Of the CAC's other predicted gene products, the reducing PKS ATR6 might synthesize a polyketide chain. This polyketide is probably transferred onto the atranone backbone by the polyketide transferase ATR5. Other predicted CAC products include 4 oxygenases (ATR2, ATR3, ATR4, and ATR14), 3 short-chain reductases (ATR7, ATR9, and ATR10), and a methyltransferase (ATR12). These may all be involved in the various steps of atranone biosynthesis, although their specific roles must await experimental determination. The polypeptide is Short-chain dehydrogenase/reductase ATR9 (Stachybotrys chlorohalonatus (strain IBT 40285)).